Reading from the N-terminus, the 275-residue chain is Non-heme chloroperoxidase CPO-A1 (275 aa).

In terms of domain architecture, AB hydrolase-1 spans 22–255 (PVVFIHGWPL…KVYEGSSHGI (234 aa)). Active-site charge relay system residues include Ser-95, Asp-224, and His-253.

This sequence belongs to the AB hydrolase superfamily. Bacterial non-heme haloperoxidase / perhydrolase family. As to quaternary structure, homodimer.

With respect to regulation, brominating activity not inhibited by azide, peroxidase activity stimulated by bromide. In terms of biological role, may be a chlorinating enzyme involved in 7-chlorotetracycline biosynthesis. Able to brominate as well. This is Non-heme chloroperoxidase CPO-A1 (bpoA1) from Kitasatospora aureofaciens (Streptomyces aureofaciens).